The chain runs to 577 residues: Probable L-gulonolactone oxidase 4 (577 aa).

Positions 1 to 17 are cleaved as a signal peptide; sequence MSFWLSLIFCFFTFASS. In terms of domain architecture, FAD-binding PCMH-type spans 46–228; sequence SICKAAKVEY…SQVTFELQPM (183 aa).

Belongs to the oxygen-dependent FAD-linked oxidoreductase family. FAD serves as cofactor.

It catalyses the reaction L-gulono-1,4-lactone + O2 = L-ascorbate + H2O2 + H(+). It functions in the pathway cofactor biosynthesis; L-ascorbate biosynthesis. Its function is as follows. May be involved in the biosynthesis of ascorbic acid. In Arabidopsis thaliana (Mouse-ear cress), this protein is Probable L-gulonolactone oxidase 4.